Consider the following 406-residue polypeptide: 5-cytosine rRNA methyltransferase NSUN4 (406 aa).

Gly207, Gly208, Lys209, Asp226, Arg231, Asp259, Gly260, and Asp277 together coordinate S-adenosyl-L-methionine. Cys332 (nucleophile) is an active-site residue.

The protein belongs to the class I-like SAM-binding methyltransferase superfamily. RsmB/NOP family.

It localises to the mitochondrion. The catalysed reaction is a cytidine in rRNA + S-adenosyl-L-methionine = a 5-methylcytidine in rRNA + S-adenosyl-L-homocysteine + H(+). It carries out the reaction a cytidine in mRNA + S-adenosyl-L-methionine = a 5-methylcytidine in mRNA + S-adenosyl-L-homocysteine + H(+). Functionally, mitochondrial RNA cytosine C(5)-methyltransferase that methylates cytosine to 5-methylcytosine (m5C) in various RNAs, such as rRNAs, mRNAs and some long non-coding RNAs (lncRNAs). Involved in mitochondrial ribosome small subunit (SSU) maturation by catalyzing methylation of mitochondrial 12S rRNA. The polypeptide is 5-cytosine rRNA methyltransferase NSUN4 (nsun4) (Xenopus laevis (African clawed frog)).